We begin with the raw amino-acid sequence, 532 residues long: Pentatricopeptide repeat-containing protein At4g02820, mitochondrial (532 aa).

The N-terminal 28 residues, 1 to 28 (MNKNMLVRSARPTLASIHRLFSAAAAAT), are a transit peptide targeting the mitochondrion. Residues 35-56 (PVVKPRSGGGKGGESANKKETV) form a disordered region. 10 PPR repeats span residues 161–195 (GHAA…GFLK), 196–226 (SCLP…LKIR), 230–264 (DIVT…KLNP), 265–295 (DWVT…MEKL), 300–330 (NRVA…VKSS), 335–365 (NDAE…WESV), 370–404 (DARI…GINP), 405–435 (SYST…AIDS), 442–472 (NVRL…LQKA), and 476–512 (NTQL…DEET).

The protein belongs to the PPR family. P subfamily.

Its subcellular location is the mitochondrion. This chain is Pentatricopeptide repeat-containing protein At4g02820, mitochondrial, found in Arabidopsis thaliana (Mouse-ear cress).